The following is a 773-amino-acid chain: Ribosomal protein S6 kinase alpha-4 (773 aa).

Positions 33–301 (FALLKVLGTG…AQEVKSHPFF (269 aa)) constitute a Protein kinase 1 domain. Residues 39–47 (LGTGAYGKV) and Lys-65 each bind ATP. The active-site Proton acceptor is the Asp-161. Ser-196 carries the post-translational modification Phosphoserine; by autocatalysis. One can recognise an AGC-kinase C-terminal domain in the interval 302–371 (QGLDWVALAA…VAPSILFDHN (70 aa)). Position 343 is a phosphoserine; by MAPK1, MAPK3 and MAPK14 (Ser-343). Phosphoserine is present on Ser-347. A phosphoserine; by autocatalysis mark is found at Ser-360 and Ser-365. Residues 417–425 (LGQGSFSVC) and Lys-440 each bind ATP. The Protein kinase 2 domain occupies 417 to 674 (LGQGSFSVCR…LEGLRSSSWL (258 aa)). Asp-530 functions as the Proton acceptor in the catalytic mechanism. At Thr-542 the chain carries Phosphothreonine. Position 568 is a phosphothreonine; by MAPK1, MAPK3 and MAPK14 (Thr-568). Phosphoserine occurs at positions 634 and 678. Disordered stretches follow at residues 674–696 (LQDG…SSGP) and 728–773 (AKRR…LSPS). At Thr-687 the chain carries Phosphothreonine. Ser-737 and Ser-745 each carry phosphoserine; by autocatalysis.

The protein belongs to the protein kinase superfamily. AGC Ser/Thr protein kinase family. S6 kinase subfamily. In terms of assembly, forms a complex with either MAPK1/ERK2 or MAPK3/ERK1 in quiescent cells which transiently dissociates following mitogenic stimulation. Also associates with MAPK14/p38-alpha. Activated RPS6KA4 associates with and phosphorylates the NF-kappa-B p65 subunit RELA. It depends on Mg(2+) as a cofactor. Post-translationally, ser-343 and Thr-568 phosphorylation is required for kinase activity. Ser-343 and Ser-196 are autophosphorylated by the C-terminal kinase domain, and their phosphorylation is essential for the catalytic activity of the N-terminal kinase domain. Phosphorylated at Ser-343, Thr-568 and Thr-687 by MAPK1/ERK2, MAPK3/ERK1 and MAPK14/p38-alpha. Autophosphorylated at Ser-737 and Ser-745 by the N-terminal kinase domain.

It is found in the nucleus. It carries out the reaction L-seryl-[protein] + ATP = O-phospho-L-seryl-[protein] + ADP + H(+). It catalyses the reaction L-threonyl-[protein] + ATP = O-phospho-L-threonyl-[protein] + ADP + H(+). Its activity is regulated as follows. Activated by phosphorylation at Ser-343, Thr-568 and Thr-687 by MAPK1/ERK2, MAPK3/ERK1 and MAPK14/p38-alpha, and by further autophosphorylation of Ser-196, Ser-360 and Ser-365 by the activated C-terminal kinase domain. Its function is as follows. Serine/threonine-protein kinase that is required for the mitogen or stress-induced phosphorylation of the transcription factors CREB1 and ATF1 and for the regulation of the transcription factor RELA, and that contributes to gene activation by histone phosphorylation and functions in the regulation of inflammatory genes. Phosphorylates CREB1 and ATF1 in response to mitogenic or stress stimuli such as UV-C irradiation, epidermal growth factor (EGF) and anisomycin. Plays an essential role in the control of RELA transcriptional activity in response to TNF. Phosphorylates 'Ser-10' of histone H3 in response to mitogenics, stress stimuli and EGF, which results in the transcriptional activation of several immediate early genes, including proto-oncogenes c-fos/FOS and c-jun/JUN. May also phosphorylate 'Ser-28' of histone H3. Mediates the mitogen- and stress-induced phosphorylation of high mobility group protein 1 (HMGN1/HMG14). In lipopolysaccharide-stimulated primary macrophages, acts downstream of the Toll-like receptor TLR4 to limit the production of pro-inflammatory cytokines. Functions probably by inducing transcription of the MAP kinase phosphatase DUSP1 and the anti-inflammatory cytokine interleukin 10 (IL10), via CREB1 and ATF1 transcription factors. The chain is Ribosomal protein S6 kinase alpha-4 (Rps6ka4) from Mus musculus (Mouse).